Reading from the N-terminus, the 432-residue chain is MGKSVVILGAQWGDEGKGKIVDLLTDRVKYVVRYQGGHNAGHTLIINGEKTVLRLIPSGMLHPNVTCLIGNGVVVSPEALMKEMGELESRGIKVRERLLISEACPLILPYHVAMDHAREAALGKKAIGTTGRGIGPAYEDKVARRGLRVGDLFNKEAFAEKLKNILEYYNFQLVNYYKVEPVDYQKTLDDVMAIADVITGMVADITTILDTARKNGEHILFEGAQGTMLDIDHGTYPYVTSSNTTAGGVATGSGFGPRNLDYVLGIIKAYCTRVGGGPFTTELFDDVGAEIARKGNEFGAVTGRPRRCGWFDAVAIRRAIQLNSISGFCMTKLDVLDGFDEVKICVAYKMPNGEIVEYAPLAAKDWEGVEPIYETLPGWKENTFRITDVNKLPQNCINYIKRIEEVTGVPIDILSTGPDRVETMILREPFAA.

GTP is bound by residues 13–19 (GDEGKGK) and 41–43 (GHT). Catalysis depends on Asp14, which acts as the Proton acceptor. Mg(2+)-binding residues include Asp14 and Gly41. IMP-binding positions include 14–17 (DEGK), 39–42 (NAGH), Thr130, Arg144, Gln225, Thr240, and Arg304. The active-site Proton donor is His42. Residue 300 to 306 (AVTGRPR) participates in substrate binding. Residues Arg306, 332–334 (KLD), and 415–417 (STG) contribute to the GTP site.

The protein belongs to the adenylosuccinate synthetase family. As to quaternary structure, homodimer. Mg(2+) serves as cofactor.

The protein localises to the cytoplasm. The catalysed reaction is IMP + L-aspartate + GTP = N(6)-(1,2-dicarboxyethyl)-AMP + GDP + phosphate + 2 H(+). It functions in the pathway purine metabolism; AMP biosynthesis via de novo pathway; AMP from IMP: step 1/2. In terms of biological role, plays an important role in the de novo pathway of purine nucleotide biosynthesis. Catalyzes the first committed step in the biosynthesis of AMP from IMP. The polypeptide is Adenylosuccinate synthetase (Haemophilus influenzae (strain ATCC 51907 / DSM 11121 / KW20 / Rd)).